The primary structure comprises 303 residues: Monoglyceride lipase (303 aa).

Phosphothreonine is present on Thr-10. Tyr-58 carries the 3'-nitrotyrosine modification. Ser-122 functions as the Nucleophile in the catalytic mechanism. Ser-189 bears the Phosphoserine mark. Residues Asp-239 and His-269 each act as charge relay system in the active site.

This sequence belongs to the AB hydrolase superfamily. Monoacylglycerol lipase family. In terms of assembly, homodimer. In terms of tissue distribution, ubiquitous.

The protein localises to the cytoplasm. Its subcellular location is the cytosol. The protein resides in the membrane. The enzyme catalyses Hydrolyzes glycerol monoesters of long-chain fatty acids.. It catalyses the reaction a 1-acylglycerol + H2O = glycerol + a fatty acid + H(+). It carries out the reaction a 2-acylglycerol + H2O = glycerol + a fatty acid + H(+). The catalysed reaction is 2-(5Z,8Z,11Z,14Z-eicosatetraenoyl)-glycerol + H2O = glycerol + (5Z,8Z,11Z,14Z)-eicosatetraenoate + H(+). The enzyme catalyses 1-octanoylglycerol + H2O = octanoate + glycerol + H(+). It catalyses the reaction 1-decanoylglycerol + H2O = decanoate + glycerol + H(+). It carries out the reaction 1-dodecanoylglycerol + H2O = dodecanoate + glycerol + H(+). The catalysed reaction is 1-tetradecanoylglycerol + H2O = tetradecanoate + glycerol + H(+). The enzyme catalyses 2-hexadecanoylglycerol + H2O = glycerol + hexadecanoate + H(+). It catalyses the reaction 1-(9Z-octadecenoyl)-glycerol + H2O = glycerol + (9Z)-octadecenoate + H(+). It carries out the reaction 2-(9Z-octadecenoyl)-glycerol + H2O = glycerol + (9Z)-octadecenoate + H(+). The catalysed reaction is 2-(9Z,12Z-octadecadienoyl)-glycerol + H2O = (9Z,12Z)-octadecadienoate + glycerol + H(+). The enzyme catalyses 1-(5Z,8Z,11Z,14Z-eicosatetraenoyl)-glycerol + H2O = glycerol + (5Z,8Z,11Z,14Z)-eicosatetraenoate + H(+). It catalyses the reaction 1-(9Z,12Z-octadecadienoyl)-glycerol + H2O = (9Z,12Z)-octadecadienoate + glycerol + H(+). It carries out the reaction 1-hexadecanoylglycerol + H2O = glycerol + hexadecanoate + H(+). The catalysed reaction is 1-octadecanoylglycerol + H2O = octadecanoate + glycerol + H(+). The enzyme catalyses prostaglandin E2 1-glyceryl ester + H2O = prostaglandin E2 + glycerol + H(+). It catalyses the reaction prostaglandin D2-1-glycerol ester + H2O = prostaglandin D2 + glycerol + H(+). It carries out the reaction 2-glyceryl-15-deoxy-Delta(12,14)-prostaglandin J2 + H2O = 15-deoxy-Delta(12,14)-prostaglandin J2 + glycerol + H(+). The catalysed reaction is prostaglandin F2alpha 1-glyceryl ester + H2O = prostaglandin F2alpha + glycerol + H(+). The protein operates within glycerolipid metabolism; triacylglycerol degradation. Functionally, converts monoacylglycerides to free fatty acids and glycerol. Hydrolyzes the endocannabinoid 2-arachidonoylglycerol, and thereby contributes to the regulation of endocannabinoid signaling, nociperception and perception of pain. Regulates the levels of fatty acids that serve as signaling molecules and promote cancer cell migration, invasion and tumor growth. This is Monoglyceride lipase from Mus musculus (Mouse).